Consider the following 432-residue polypeptide: Probable rhamnogalacturonase E (432 aa).

Residues 1–21 (MQSKTFSVLSSCLLLIATVQG) form the signal peptide. A disulfide bridge links Cys42 with Cys68. Asn53, Asn91, and Asn106 each carry an N-linked (GlcNAc...) asparagine glycan. Catalysis depends on Asp221, which acts as the Proton donor. Cys223 and Cys240 are disulfide-bonded. N-linked (GlcNAc...) asparagine glycosylation is found at Asn241 and Asn256. The active site involves His296. Cystine bridges form between Cys329-Cys335 and Cys357-Cys366.

Belongs to the glycosyl hydrolase 28 family.

The protein resides in the secreted. Its function is as follows. Pectinolytic enzymes consist of four classes of enzymes: pectine lyase, polygalacturonase, pectin methylesterase and rhamnogalacturonase. Hydrolyzes alpha-D-galacturonopyranosyl-(1,2)-alpha-L-rhamnopyranosyl linkages in the backbone of the hairy regions of pectins. The protein is Probable rhamnogalacturonase E (rhgE) of Aspergillus oryzae (strain ATCC 42149 / RIB 40) (Yellow koji mold).